The chain runs to 340 residues: Protein AC11 (340 aa).

In terms of biological role, plays an essential role in nucleocapsid egress from the host nucleus to form the budded virion (BV). Does not participate in nucleocapsid formation. The sequence is that of Protein AC11 from Autographa californica nuclear polyhedrosis virus (AcMNPV).